Here is a 182-residue protein sequence, read N- to C-terminus: Large ribosomal subunit protein uL22 (182 aa).

The disordered stretch occupies residues 155–182 (SGVDGAKQGKKKKKTDGVEKATTKRQKQ).

It belongs to the universal ribosomal protein uL22 family.

In Carabus granulatus (Ground beetle), this protein is Large ribosomal subunit protein uL22 (RpL17).